A 556-amino-acid polypeptide reads, in one-letter code: MKTDIQIAQEAQMKHIKDVAELIDIHEDDLELYGKYKAKVSLDVLDQLKDKPDGKLVLVTAINPTPAGEGKTTTNIGLSMGLNKLGKKTSTALREPSLGPSFGVKGGAAGGGYAQVVPMADINLHFTGDFHAITSAHSLLAALVDNHLHHGNALRIDTNRIVWKRVVDMNDRALRKIVVGLGGKAQGITREDGFDITVASEIMAILCLANDREDLKERLGNMVVAYNVDGDAVRAKDLEAQGALTLILKDAINPNIVQTLENTPAFIHGGPFANIAHGCNSVLATKLALKTGDYAVTEAGFGADLGAEKFFDIKCRYAGLNPDVAVIVATVRALKMHGGVAKEDLGTENLDALAKGMTNLERHIENVAKFGVPSVVAINAFPTDTEAEKQLVFDKCKEMGVDVAISDVFAKGGDGGVELAQKVIDVCENKKSDFKVLYDVEESIPEKITKIAKEIYRADKVNFSKAAKKQIAELEKLGLDKLPICMAKTQYSFSDDPALLGAPEGFELTIRDLELAAGAGFIVALTGDIMRMPGLPKVPAANRMDVLPNGEIIGLF.

65-72 (TPAGEGKT) lines the ATP pocket.

The protein belongs to the formate--tetrahydrofolate ligase family.

It carries out the reaction (6S)-5,6,7,8-tetrahydrofolate + formate + ATP = (6R)-10-formyltetrahydrofolate + ADP + phosphate. The protein operates within one-carbon metabolism; tetrahydrofolate interconversion. The sequence is that of Formate--tetrahydrofolate ligase from Clostridium acidurici (Gottschalkia acidurici).